Reading from the N-terminus, the 190-residue chain is Ladderlectin (190 aa).

The N-terminal stretch at 1 to 18 is a signal peptide; it reads MAMLTISLLLCAAVALNG. The C-type lectin domain occupies 60-179; it reads GSRCFMFVET…GNSFPSGVLQ (120 aa). Residues Cys-153 and Cys-169 are joined by a disulfide bond.

In terms of assembly, multimeric. As to expression, expressed in cells of the branchial epithelium, hepatic sinusoids, biliary epithelium, renal interstitium, skin, and sub-mucosal granular layer of the intestine. Highly expressed in caudal kidney. Moderately expressed in liver. Weakly expressed in gill, spleen, cranial kidney and skin. Isoform 1 is highly expressed in intestine. Isoform 2 is weakly expressed in intestine.

Functionally, lectin that binds sepharose in a calcium-dependent manner. This Oncorhynchus mykiss (Rainbow trout) protein is Ladderlectin.